Here is a 359-residue protein sequence, read N- to C-terminus: UDP-N-acetylglucosamine--N-acetylmuramyl-(pentapeptide) pyrophosphoryl-undecaprenol N-acetylglucosamine transferase (359 aa).

Residues 13 to 15, asparagine 125, arginine 161, serine 193, isoleucine 241, and glutamine 285 contribute to the UDP-N-acetyl-alpha-D-glucosamine site; that span reads TAG.

The protein belongs to the glycosyltransferase 28 family. MurG subfamily.

Its subcellular location is the cell membrane. The catalysed reaction is di-trans,octa-cis-undecaprenyl diphospho-N-acetyl-alpha-D-muramoyl-L-alanyl-D-glutamyl-meso-2,6-diaminopimeloyl-D-alanyl-D-alanine + UDP-N-acetyl-alpha-D-glucosamine = di-trans,octa-cis-undecaprenyl diphospho-[N-acetyl-alpha-D-glucosaminyl-(1-&gt;4)]-N-acetyl-alpha-D-muramoyl-L-alanyl-D-glutamyl-meso-2,6-diaminopimeloyl-D-alanyl-D-alanine + UDP + H(+). It participates in cell wall biogenesis; peptidoglycan biosynthesis. Cell wall formation. Catalyzes the transfer of a GlcNAc subunit on undecaprenyl-pyrophosphoryl-MurNAc-pentapeptide (lipid intermediate I) to form undecaprenyl-pyrophosphoryl-MurNAc-(pentapeptide)GlcNAc (lipid intermediate II). The protein is UDP-N-acetylglucosamine--N-acetylmuramyl-(pentapeptide) pyrophosphoryl-undecaprenol N-acetylglucosamine transferase of Corynebacterium diphtheriae (strain ATCC 700971 / NCTC 13129 / Biotype gravis).